The chain runs to 208 residues: Large ribosomal subunit protein uL3 (208 aa).

The tract at residues 117–147 (FQGVIKRHGQSRGPMAHGSRYHRRPGSMGPV) is disordered.

The protein belongs to the universal ribosomal protein uL3 family. In terms of assembly, part of the 50S ribosomal subunit. Forms a cluster with proteins L14 and L19.

Functionally, one of the primary rRNA binding proteins, it binds directly near the 3'-end of the 23S rRNA, where it nucleates assembly of the 50S subunit. The chain is Large ribosomal subunit protein uL3 from Streptococcus equi subsp. zooepidemicus (strain H70).